Reading from the N-terminus, the 496-residue chain is Cytochrome P450 71B1 (496 aa).

Cys436 provides a ligand contact to heme.

The protein belongs to the cytochrome P450 family. The cofactor is heme.

The protein is Cytochrome P450 71B1 (CYP71B1) of Thlaspi arvense (Field penny-cress).